Here is a 149-residue protein sequence, read N- to C-terminus: Calmodulin-like protein 3 (149 aa).

4 EF-hand domains span residues 8-43 (EQIA…LGQN), 44-79 (PTEA…KMKD), 81-116 (DSEE…LGEK), and 117-149 (LSDE…LVSK). Positions 21, 23, 25, 27, 32, 57, 59, 61, 63, 68, 94, 96, 98, 105, 130, 132, 134, 136, and 141 each coordinate Ca(2+).

The protein belongs to the calmodulin family. As to quaternary structure, interacts with MYO10, the interaction is calcium-dependent and essential for MYO10 function in filopodial extension.

May function as a specific light chain of unconventional myosin-10 (MYO10), also enhances MYO10 translation, possibly by acting as a chaperone for the emerging MYO10 heavy chain protein. May compete with calmodulin by binding, with different affinities, to cellular substrates. The polypeptide is Calmodulin-like protein 3 (Calml3) (Mus musculus (Mouse)).